A 216-amino-acid polypeptide reads, in one-letter code: HTH-type transcriptional regulator EthR (216 aa).

Residues 1 to 10 show a composition bias toward polar residues; the sequence is MTTSAASQAS. A disordered region spans residues 1-24; that stretch reads MTTSAASQASLPRGRRTARPSGDD. Residues 23–83 enclose the HTH tetR-type domain; it reads DDRELAILAT…TLLDRVVNQA (61 aa). A DNA-binding region (H-T-H motif) is located at residues 46 to 65; the sequence is SVDDLAKGAGISRPTFYFYF.

Homodimer.

Involved in the repression of the monooxygenase EthA which is responsible of the formation of the active metabolite of ethionamide (ETH). This is HTH-type transcriptional regulator EthR (ethR) from Mycobacterium bovis (strain ATCC BAA-935 / AF2122/97).